Here is a 414-residue protein sequence, read N- to C-terminus: Secernin-1 (414 aa).

Belongs to the peptidase C69 family. Secernin subfamily.

The protein resides in the cytoplasm. Regulates exocytosis in mast cells. Increases both the extent of secretion and the sensitivity of mast cells to stimulation with calcium. This chain is Secernin-1 (Scrn1), found in Rattus norvegicus (Rat).